Consider the following 338-residue polypeptide: MSTIARRGFHYMQRLNSANVSPALLEKAQNRVIDAALTFIRERAKFKGELMRSLGGVAATSSLLGVPLGHHSSFHEGSAFAPPRIREAIWCDSTNSTTEEGKNLRDPRVITNVGDVPIEEIRDCGVDDKRLANVISESVKLVMDEDPLRPLVLGGDHSISFPVVRAVSEKLGGAVDILHFDAHPDLYHDFEGNYYSHASPFARIMEGGYARRLVQVGIRSITNDVREQVKKYGVETHEMRTLSRDRPILENLKLGEGVKGVYVSIDVDSLDPSIAPGVSHHEPGGLLFRDILNILQNLQGDIVGGDVVEYNPQRDTYDGITALVAAKLVRELAAKMSK.

A mitochondrion-targeting transit peptide spans 1–15 (MSTIARRGFHYMQRL). Residues S73 and 92–95 (DSTN) contribute to the L-ornithine site. The Mn(2+) site is built by H157, D181, H183, and D185. 185-187 (DLY) lines the L-ornithine pocket. Residue 191–193 (EGN) coordinates substrate. S220 contributes to the L-ornithine binding site. Residues D266 and D268 each contribute to the Mn(2+) site. Residue E309 coordinates substrate.

This sequence belongs to the arginase family. Forms homohexamers. Requires Mn(2+) as cofactor.

It is found in the mitochondrion. The enzyme catalyses L-arginine + H2O = urea + L-ornithine. It carries out the reaction agmatine + H2O = urea + putrescine. The protein operates within nitrogen metabolism; urea cycle; L-ornithine and urea from L-arginine: step 1/1. Its pathway is amine and polyamine biosynthesis; putrescine biosynthesis via agmatine pathway; putrescine from agmatine: step 1/1. In terms of biological role, catalyzes the hydrolysis of L-arginine to urea and L-ornithine. The latter can be utilized in the urea cycle or as a precursor for the synthesis of both polyamines and proline. Possesses agmatinase activity. Catalyzes the formation of putrescine from agmatine. In Medicago truncatula (Barrel medic), this protein is Arginase, mitochondrial.